The primary structure comprises 164 residues: Serine/arginine-rich splicing factor 3 (164 aa).

Residue Met1 is modified to N-acetylmethionine. Positions 1 to 90 are sufficient for interaction with NXF1 and SRSP; the sequence is MHRDSCPLDC…SNGEKRSRNR (90 aa). Position 5 is a phosphoserine (Ser5). Residues 10 to 83 form the RRM domain; the sequence is CKVYVGNLGN…CRVRVELSNG (74 aa). Lys23 bears the N6-acetyllysine mark. Residues 81-164 are disordered; it reads SNGEKRSRNR…RSRSRSNERK (84 aa). Positions 107 to 128 are enriched in basic residues; it reads RSPPPRRRSPRRRSFSRSRSRS. The stretch at 119-133 is one B-1 repeat; that stretch reads RSFSRSRSRSLSRDR. Residues 119 to 164 are 2 X approximate repeats, basic; that stretch reads RSFSRSRSRSLSRDRRRERSLSRERNHKPSRSFSRSRSRSRSNERK. Residues 129–142 are compositionally biased toward basic and acidic residues; it reads LSRDRRRERSLSRE. The segment covering 143–158 has biased composition (basic residues); it reads RNHKPSRSFSRSRSRS. The B-2 repeat unit spans residues 149-164; that stretch reads RSFSRSRSRSRSNERK.

Belongs to the splicing factor SR family. Interacts with CPSF6. Interacts with RBMY1A1. Interacts with SREK1/SFRS12. Interacts with NXF1. Interacts with YTHDC1, leading to recruitment to RNA elements adjacent to m6A sites. Interacts with SRSP; increases SRSF3 binding to specific exons. In terms of processing, phosphorylated by CLK1, CLK2, CLK3 and CLK4. Extensively phosphorylated on serine residues in the RS domain.

Its subcellular location is the nucleus. The protein resides in the nucleus speckle. It localises to the cytoplasm. In terms of biological role, splicing factor, which binds the consensus motif 5'-C[ACU][AU]C[ACU][AC]C-3' within pre-mRNA and promotes specific exons inclusion during alternative splicing. Interaction with YTHDC1, a RNA-binding protein that recognizes and binds N6-methyladenosine (m6A)-containing RNAs, promotes recruitment of SRSF3 to its mRNA-binding elements adjacent to m6A sites within exons. Also functions as an adapter involved in mRNA nuclear export. Binds mRNA which is thought to be transferred to the NXF1-NXT1 heterodimer for export (TAP/NXF1 pathway); enhances NXF1-NXT1 RNA-binding activity. Involved in nuclear export of m6A-containing mRNAs via interaction with YTHDC1: interaction with YTHDC1 facilitates m6A-containing mRNA-binding to both SRSF3 and NXF1, promoting mRNA nuclear export. The protein is Serine/arginine-rich splicing factor 3 (SRSF3) of Bos taurus (Bovine).